The primary structure comprises 213 residues: ATP synthase peripheral stalk subunit OSCP, mitochondrial (213 aa).

Residues 1-23 constitute a mitochondrion transit peptide; it reads MATPAVSGLSRQVRCFSTSVVRP. The short motif at 5–23 is the SIFI-degron element; sequence AVSGLSRQVRCFSTSVVRP. Residues lysine 54, lysine 60, lysine 70, and lysine 73 each carry the N6-acetyllysine modification. The residue at position 90 (lysine 90) is an N6-succinyllysine. Residues lysine 158 and lysine 162 each carry the N6-acetyllysine; alternate modification. N6-succinyllysine; alternate is present on residues lysine 158 and lysine 162. N6-acetyllysine is present on residues lysine 172, lysine 176, and lysine 192. N6-succinyllysine is present on lysine 199.

This sequence belongs to the ATPase delta chain family. As to quaternary structure, component of the ATP synthase complex composed at least of ATP5F1A/subunit alpha, ATP5F1B/subunit beta, ATP5MC1/subunit c (homooctomer), MT-ATP6/subunit a, MT-ATP8/subunit 8, ATP5ME/subunit e, ATP5MF/subunit f, ATP5MG/subunit g, ATP5MK/subunit k, ATP5MJ/subunit j, ATP5F1C/subunit gamma, ATP5F1D/subunit delta, ATP5F1E/subunit epsilon, ATP5PF/subunit F6, ATP5PB/subunit b, ATP5PD/subunit d, ATP5PO/subunit OSCP. ATP synthase complex consists of a soluble F(1) head domain (subunits alpha(3) and beta(3)) - the catalytic core - and a membrane F(0) domain - the membrane proton channel (subunits c, a, 8, e, f, g, k and j). These two domains are linked by a central stalk (subunits gamma, delta, and epsilon) rotating inside the F1 region and a stationary peripheral stalk (subunits F6, b, d, and OSCP). Acetylation at Lys-162 decreases ATP production. Deacetylated by SIRT3. In terms of processing, in response to mitochondrial stress, the precursor protein is ubiquitinated by the SIFI complex in the cytoplasm before mitochondrial import, leading to its degradation. Within the SIFI complex, UBR4 initiates ubiquitin chain that are further elongated or branched by KCMF1.

It localises to the mitochondrion. It is found in the mitochondrion inner membrane. Subunit OSCP, of the mitochondrial membrane ATP synthase complex (F(1)F(0) ATP synthase or Complex V) that produces ATP from ADP in the presence of a proton gradient across the membrane which is generated by electron transport complexes of the respiratory chain. ATP synthase complex consist of a soluble F(1) head domain - the catalytic core - and a membrane F(1) domain - the membrane proton channel. These two domains are linked by a central stalk rotating inside the F(1) region and a stationary peripheral stalk. During catalysis, ATP synthesis in the catalytic domain of F(1) is coupled via a rotary mechanism of the central stalk subunits to proton translocation. In vivo, can only synthesize ATP although its ATP hydrolase activity can be activated artificially in vitro. Part of the complex F(0) domain. Part of the complex F(0) domain and the peripheric stalk, which acts as a stator to hold the catalytic alpha(3)beta(3) subcomplex and subunit a/ATP6 static relative to the rotary elements. The chain is ATP synthase peripheral stalk subunit OSCP, mitochondrial from Pongo abelii (Sumatran orangutan).